A 451-amino-acid polypeptide reads, in one-letter code: Phosphoglucosamine mutase (451 aa).

Ser107 functions as the Phosphoserine intermediate in the catalytic mechanism. The Mg(2+) site is built by Ser107, Asp246, Asp248, and Asp250. At Ser107 the chain carries Phosphoserine.

It belongs to the phosphohexose mutase family. Mg(2+) is required as a cofactor. In terms of processing, activated by phosphorylation.

The enzyme catalyses alpha-D-glucosamine 1-phosphate = D-glucosamine 6-phosphate. Catalyzes the conversion of glucosamine-6-phosphate to glucosamine-1-phosphate. In Burkholderia cenocepacia (strain ATCC BAA-245 / DSM 16553 / LMG 16656 / NCTC 13227 / J2315 / CF5610) (Burkholderia cepacia (strain J2315)), this protein is Phosphoglucosamine mutase.